The following is a 257-amino-acid chain: Ribonuclease HII (257 aa).

Residues 71–257 (ELIAGIDEVG…EPIKSMVNFK (187 aa)) enclose the RNase H type-2 domain. Residues Asp77, Glu78, and Asp169 each coordinate a divalent metal cation.

This sequence belongs to the RNase HII family. Mn(2+) serves as cofactor. The cofactor is Mg(2+).

Its subcellular location is the cytoplasm. The catalysed reaction is Endonucleolytic cleavage to 5'-phosphomonoester.. Endonuclease that specifically degrades the RNA of RNA-DNA hybrids. The sequence is that of Ribonuclease HII (rnhB) from Lactococcus lactis subsp. cremoris (strain MG1363).